The primary structure comprises 163 residues: Nucleotide-binding protein BcerKBAB4_1061 (163 aa).

The protein belongs to the YajQ family.

Its function is as follows. Nucleotide-binding protein. This is Nucleotide-binding protein BcerKBAB4_1061 from Bacillus mycoides (strain KBAB4) (Bacillus weihenstephanensis).